We begin with the raw amino-acid sequence, 530 residues long: Sensor protein kinase PilS (530 aa).

6 helical membrane passes run 25-37 (LTIGLVLVLLISS), 57-70 (WCYLVFNILVALFL), 76-98 (LLPIFILALTDVLMLCGLFYAGG), 101-119 (PSGIGSLLVVAVAIANILL), 124-144 (GLVIAAAASLGLLYLTFFLSL), and 156-174 (AGGLGTLCFAAALVIQALV). At 175 to 530 (RRQEQTETLA…ITFAHPRKLS (356 aa)) the chain is on the cytoplasmic side. The 65-residue stretch at 196 to 260 (ELNALILQRM…KQWRLNPSLR (65 aa)) folds into the PAS domain. The Histidine kinase domain occupies 316-527 (GIAHEIRNPL…CFRITFAHPR (212 aa)). Position 319 is a phosphohistidine; by autocatalysis (histidine 319).

In terms of assembly, interacts with PilA.

It is found in the cell inner membrane. The enzyme catalyses ATP + protein L-histidine = ADP + protein N-phospho-L-histidine.. In terms of biological role, member of the two-component regulatory system PilS/PilR that regulates the expression of multiple genes including the type IV pilus (T4P) major subunit PilA. Thereby, plays a major role in the regulation of multiple motility pathways. Functions as a membrane-associated protein kinase that phosphorylates PilR in response to environmental signals leading to activation of specific gene promoters including the pilin gene. This Pseudomonas aeruginosa (strain ATCC 15692 / DSM 22644 / CIP 104116 / JCM 14847 / LMG 12228 / 1C / PRS 101 / PAO1) protein is Sensor protein kinase PilS (pilS).